Reading from the N-terminus, the 177-residue chain is Large ribosomal subunit protein bL9 (177 aa).

Positions 151–177 (EDEEIAEAAPVAEAQAEADGHSTEETA) are disordered. The span at 157-167 (EAAPVAEAQAE) shows a compositional bias: low complexity. The span at 168-177 (ADGHSTEETA) shows a compositional bias: basic and acidic residues.

This sequence belongs to the bacterial ribosomal protein bL9 family.

Its function is as follows. Binds to the 23S rRNA. This Solidesulfovibrio magneticus (strain ATCC 700980 / DSM 13731 / RS-1) (Desulfovibrio magneticus) protein is Large ribosomal subunit protein bL9.